The sequence spans 366 residues: Ferrochelatase (366 aa).

Positions 210 and 293 each coordinate Fe cation.

Belongs to the ferrochelatase family.

It localises to the cytoplasm. The catalysed reaction is heme b + 2 H(+) = protoporphyrin IX + Fe(2+). The protein operates within porphyrin-containing compound metabolism; protoheme biosynthesis; protoheme from protoporphyrin-IX: step 1/1. In terms of biological role, catalyzes the ferrous insertion into protoporphyrin IX. The sequence is that of Ferrochelatase from Leptospira borgpetersenii serovar Hardjo-bovis (strain JB197).